The chain runs to 440 residues: UDP-N-acetylmuramoylalanine--D-glutamate ligase (440 aa).

Residue 113 to 119 (GTNGKST) coordinates ATP.

Belongs to the MurCDEF family.

It localises to the cytoplasm. The enzyme catalyses UDP-N-acetyl-alpha-D-muramoyl-L-alanine + D-glutamate + ATP = UDP-N-acetyl-alpha-D-muramoyl-L-alanyl-D-glutamate + ADP + phosphate + H(+). It participates in cell wall biogenesis; peptidoglycan biosynthesis. Its function is as follows. Cell wall formation. Catalyzes the addition of glutamate to the nucleotide precursor UDP-N-acetylmuramoyl-L-alanine (UMA). The polypeptide is UDP-N-acetylmuramoylalanine--D-glutamate ligase (murD) (Buchnera aphidicola subsp. Acyrthosiphon pisum (strain APS) (Acyrthosiphon pisum symbiotic bacterium)).